The sequence spans 153 residues: IAA acetyltransferase (153 aa).

Residues 4 to 153 form the N-acetyltransferase domain; it reads VTIARESPLQ…PLSLFMEKPL (150 aa).

Its function is as follows. Participates in the tryptophan-dependent indole-3-acetic acid production, which is a phytohormone released by A.brasilense. The chain is IAA acetyltransferase from Azospirillum brasilense.